Here is a 397-residue protein sequence, read N- to C-terminus: Zinc finger CCCH domain-containing protein 33 (397 aa).

5 consecutive C3H1-type zinc fingers follow at residues 40 to 68 (RPGE…HPRD), 85 to 113 (RIGQ…HPRN), 131 to 159 (RSNE…HPQP), 274 to 302 (RPGQ…HPRD), and 320 to 348 (RPGE…HPMR). Residues 361–397 (EVVETSTGKSRRLSVSETRQAATTSSGKDTTIDNTQQ) are disordered. Positions 364 to 397 (ETSTGKSRRLSVSETRQAATTSSGKDTTIDNTQQ) are enriched in polar residues.

The protein resides in the nucleus. This Arabidopsis thaliana (Mouse-ear cress) protein is Zinc finger CCCH domain-containing protein 33 (ZFN1).